Consider the following 817-residue polypeptide: Dynamin-related protein 5A (817 aa).

The span at 1–20 shows a compositional bias: polar residues; the sequence is MANSNTYLTTPTKTPSSRRN. The disordered stretch occupies residues 1-37; sequence MANSNTYLTTPTKTPSSRRNQQSQSKMQSHSKDPINA. The 288-residue stretch at 59–346 folds into the Dynamin-type G domain; it reads KLPIPEIVAI…LQKRYKEAAP (288 aa). The G1 motif stretch occupies residues 69 to 76; the sequence is GGQSDGKS. 69-76 lines the GTP pocket; the sequence is GGQSDGKS. A G2 motif region spans residues 95 to 97; it reads GTR. Residues 175–178 form a G3 motif region; sequence DTPG. Residues 175–179 and 244–247 each bind GTP; these read DTPGF and SKFD. Residues 244–247 form a G4 motif region; sequence SKFD. Residues 280–283 are G5 motif; it reads LPKD. Disordered stretches follow at residues 405–425 and 616–658; these read APEQ…IGSW and LSDT…ETPS. The span at 618-629 shows a compositional bias: basic and acidic residues; the sequence is DTSRDEPMKDQE.

This sequence belongs to the TRAFAC class dynamin-like GTPase superfamily. Dynamin/Fzo/YdjA family. Expressed in root and leaf meristems.

The protein localises to the cytoplasm. It is found in the cytoskeleton. It localises to the phragmoplast. Probable microtubule-associated force-producing protein that is targeted to the forming cell plate during cytokinesis. May play a role in cell division. The protein is Dynamin-related protein 5A (DRP5A) of Arabidopsis thaliana (Mouse-ear cress).